Here is a 473-residue protein sequence, read N- to C-terminus: MTLRIFDSASRQLRDFVPLREGRASVYLCGATVQSAPHIGHLRSGVAFDILRNWLTYMGLDVAFIRNVTDIDDKILNKAAEHNRPWWEWAATYEREFQWAYDQLGVTPPSLEPHATGHVPEMIEYMQRIIDAGHGYAVDGNVYLSPMSLPDYGSLSGQKLDEMDQGESAGTGKRDPRDFTLWKAAKPGEPSWDTPWGRGRPGWHLECTTMATKYLGAEFDIHAGGLDLKFPHHENEIAQAHAAGDGFARYWMHNGWVTMAGEKMSKSLGNVLSVPNLLQIVRPVELRYYLGSAHYRSMLEFSEDALREAAAGYRRLEKFVHAASSVAGKNDRTLGRSEVTDAFTDAMNDDIGVPAALAEVHKVVRSSNSRLDAARRGDSDAVESVVSAGEQVRAMLGVLGVDPLDEKWQEIAAESGAEHDALDTLVRAELDIRAKARAEKDWATADAVRDRLAAAGIVVTDTPSGAEWELSEQ.

Cys29 provides a ligand contact to Zn(2+). Residues 31-41 carry the 'HIGH' region motif; sequence ATVQSAPHIGH. Positions 207, 232, and 236 each coordinate Zn(2+). Positions 263–267 match the 'KMSKS' region motif; it reads KMSKS. Lys266 is a binding site for ATP.

The protein belongs to the class-I aminoacyl-tRNA synthetase family. Monomer. Zn(2+) serves as cofactor.

It is found in the cytoplasm. It catalyses the reaction tRNA(Cys) + L-cysteine + ATP = L-cysteinyl-tRNA(Cys) + AMP + diphosphate. This Corynebacterium kroppenstedtii (strain DSM 44385 / JCM 11950 / CIP 105744 / CCUG 35717) protein is Cysteine--tRNA ligase.